Consider the following 87-residue polypeptide: Protein L (87 aa).

In terms of biological role, this protein inhibits the multiplication of double-stranded DNA phages, such as P1 and lambda. The sequence is that of Protein L (L) from Escherichia coli.